A 62-amino-acid polypeptide reads, in one-letter code: Light-harvesting protein B-870 alpha chain (62 aa).

N-formylmethionine is present on Met-1. At 1–12 (MWRIWQLFDPRQ) the chain is on the cytoplasmic side. The chain crosses the membrane as a helical span at residues 13–33 (ALVGLATFLFVLALLIHFILL). An a bacteriochlorophyll-binding site is contributed by His-29. Topologically, residues 34–52 (STERFNWLEGASTKPVQTS) are periplasmic. The propeptide occupies 53 to 62 (MVMPSSDLAV).

It belongs to the antenna complex alpha subunit family. In terms of assembly, the core complex is formed by different alpha and beta chains, binding bacteriochlorophyll molecules, and arranged most probably in tetrameric structures disposed around the reaction center. The non-pigmented gamma chains may constitute additional components.

It is found in the cell inner membrane. Its function is as follows. Antenna complexes are light-harvesting systems, which transfer the excitation energy to the reaction centers. In Rhodospirillum rubrum, this protein is Light-harvesting protein B-870 alpha chain.